The primary structure comprises 181 residues: Probable cobalt-precorrin-6B C(15)-methyltransferase (decarboxylating) (181 aa).

S-adenosyl-L-methionine-binding positions include T16, 40–44 (GCGSG), D61, and A89.

The protein belongs to the methyltransferase superfamily. Archaeal-type CbiT family.

It carries out the reaction Co-precorrin-6B + S-adenosyl-L-methionine = Co-precorrin-7 + S-adenosyl-L-homocysteine + CO2. Its pathway is cofactor biosynthesis; adenosylcobalamin biosynthesis; cob(II)yrinate a,c-diamide from sirohydrochlorin (anaerobic route): step 8/10. Functionally, catalyzes the methylation of C-15 in cobalt-precorrin-6B followed by the decarboxylation of C-12 to form cobalt-precorrin-7. This Methanococcus maripaludis (strain C6 / ATCC BAA-1332) protein is Probable cobalt-precorrin-6B C(15)-methyltransferase (decarboxylating).